The following is a 949-amino-acid chain: Bifunctional uridylyltransferase/uridylyl-removing enzyme (949 aa).

Positions 1–37 are disordered; the sequence is MKETSFWGETPSLSFADDTDKPLSDRTASPPCDPASS. The segment at 1–395 is uridylyltransferase; that stretch reads MKETSFWGET…TTGEPPKVVP (395 aa). The uridylyl-removing stretch occupies residues 396–756; the sequence is GPEEFQTIAG…AYPIPERGVT (361 aa). The 117-residue stretch at 516–632 folds into the HD domain; sequence VDEHIVEAVR…LDLADTIQSP (117 aa). ACT domains are found at residues 757–834 and 870–949; these read ELTV…LDIR and VIEV…TPAS.

Belongs to the GlnD family. The cofactor is Mg(2+).

It carries out the reaction [protein-PII]-L-tyrosine + UTP = [protein-PII]-uridylyl-L-tyrosine + diphosphate. The enzyme catalyses [protein-PII]-uridylyl-L-tyrosine + H2O = [protein-PII]-L-tyrosine + UMP + H(+). Uridylyltransferase (UTase) activity is inhibited by glutamine, while glutamine activates uridylyl-removing (UR) activity. Modifies, by uridylylation and deuridylylation, the PII regulatory proteins (GlnB and homologs), in response to the nitrogen status of the cell that GlnD senses through the glutamine level. Under low glutamine levels, catalyzes the conversion of the PII proteins and UTP to PII-UMP and PPi, while under higher glutamine levels, GlnD hydrolyzes PII-UMP to PII and UMP (deuridylylation). Thus, controls uridylylation state and activity of the PII proteins, and plays an important role in the regulation of nitrogen assimilation and metabolism. The protein is Bifunctional uridylyltransferase/uridylyl-removing enzyme of Gluconobacter oxydans (strain 621H) (Gluconobacter suboxydans).